Here is a 140-residue protein sequence, read N- to C-terminus: Small ribosomal subunit protein uS12m (140 aa).

Residues 1 to 30 constitute a mitochondrion transit peptide; sequence MNFLRQSFGITKQLASQAIQCSYETAVRGM.

This sequence belongs to the universal ribosomal protein uS12 family.

The protein localises to the mitochondrion. This chain is Small ribosomal subunit protein uS12m (tko), found in Drosophila melanogaster (Fruit fly).